Reading from the N-terminus, the 270-residue chain is Phosphatidylglycerol--prolipoprotein diacylglyceryl transferase (270 aa).

The next 3 helical transmembrane spans lie at 17-37, 63-83, and 95-115; these read LAIH…MFLG, ILFL…CLFY, and IFYI…VIAS. Residue R146 coordinates a 1,2-diacyl-sn-glycero-3-phospho-(1'-sn-glycerol). The next 3 helical transmembrane spans lie at 182–202, 209–229, and 243–263; these read SQVY…WLYA, GEVA…AEYF, and MSMG…LWVW.

This sequence belongs to the Lgt family.

It localises to the cell inner membrane. It catalyses the reaction L-cysteinyl-[prolipoprotein] + a 1,2-diacyl-sn-glycero-3-phospho-(1'-sn-glycerol) = an S-1,2-diacyl-sn-glyceryl-L-cysteinyl-[prolipoprotein] + sn-glycerol 1-phosphate + H(+). Its pathway is protein modification; lipoprotein biosynthesis (diacylglyceryl transfer). Its function is as follows. Catalyzes the transfer of the diacylglyceryl group from phosphatidylglycerol to the sulfhydryl group of the N-terminal cysteine of a prolipoprotein, the first step in the formation of mature lipoproteins. The chain is Phosphatidylglycerol--prolipoprotein diacylglyceryl transferase from Paracidovorax citrulli (strain AAC00-1) (Acidovorax citrulli).